The chain runs to 476 residues: MGRKEEEDCSSWKKQTTNIRKTFIFMEVLGSGAFSEVFLVKQRVTGKLFALKCIKKSPAFRDSSLENEIAVLKRIKHENIVTLEDIYESTTHYYLVMQLVSGGELFDRILERGVYTEKDASLVIQQVLSAVKYLHENGIVHRDLKPENLLYLTPEENSKIMITDFGLSKMEQNGVMSTACGTPGYVAPEVLAQKPYSKAVDCWSIGVITYILLCGYPPFYEETESKLFEKIKEGYYEFESPFWDDISESAKDFICHLLEKDPNERYTCEKALRHPWIDGNTALHRDIYPSVSLQIQKNFAKSKWRQAFNAAAVVHHMRKLHMNLHSPSVRQEVENRPPVSPAPEVSRPGSHDSSITEAPILDPSTPLPALTRLPCSHSSRPSAPGGRSLNCLVNGSLRISSSLVPMQQGPLATGPCGCCSSCLNIGNKGKSSYCSEPTLFRKANKKQNFKSEVMVPVKAGGSTHCRAGQTGVCLIM.

A Protein kinase domain is found at 23–277; that stretch reads FIFMEVLGSG…CEKALRHPWI (255 aa). ATP is bound by residues 29 to 37 and K52; that span reads LGSGAFSEV. D143 serves as the catalytic Proton acceptor. The interval 277–317 is autoinhibitory domain; that stretch reads IDGNTALHRDIYPSVSLQIQKNFAKSKWRQAFNAAAVVHHM. The interval 297-318 is calmodulin-binding; sequence KNFAKSKWRQAFNAAAVVHHMR. The tract at residues 326 to 387 is disordered; sequence SPSVRQEVEN…SSRPSAPGGR (62 aa).

This sequence belongs to the protein kinase superfamily. CAMK Ser/Thr protein kinase family. CaMK subfamily. In terms of processing, prenylated on Cys-473.

The protein localises to the cytoplasm. It localises to the golgi apparatus membrane. The protein resides in the cell membrane. It catalyses the reaction L-seryl-[protein] + ATP = O-phospho-L-seryl-[protein] + ADP + H(+). It carries out the reaction L-threonyl-[protein] + ATP = O-phospho-L-threonyl-[protein] + ADP + H(+). Activated by Ca(2+)/calmodulin. Binding of calmodulin is thought to result in a conformational change and leads to activation through phosphorylation by CAMKK1. In terms of biological role, calcium/calmodulin-dependent protein kinase belonging to a proposed calcium-triggered signaling cascade. In vitro phosphorylates transcription factor CREB1. The polypeptide is Calcium/calmodulin-dependent protein kinase type 1G (Camk1g) (Rattus norvegicus (Rat)).